The sequence spans 105 residues: UPF0145 protein lpl0253 (105 aa).

The protein belongs to the UPF0145 family.

The polypeptide is UPF0145 protein lpl0253 (Legionella pneumophila (strain Lens)).